Here is a 374-residue protein sequence, read N- to C-terminus: UDP-N-acetylglucosamine--N-acetylmuramyl-(pentapeptide) pyrophosphoryl-undecaprenol N-acetylglucosamine transferase (374 aa).

UDP-N-acetyl-alpha-D-glucosamine is bound by residues 13–15 (TGG), Asn-124, Arg-165, Ser-193, and Gln-294.

It belongs to the glycosyltransferase 28 family. MurG subfamily.

The protein localises to the cell inner membrane. The catalysed reaction is di-trans,octa-cis-undecaprenyl diphospho-N-acetyl-alpha-D-muramoyl-L-alanyl-D-glutamyl-meso-2,6-diaminopimeloyl-D-alanyl-D-alanine + UDP-N-acetyl-alpha-D-glucosamine = di-trans,octa-cis-undecaprenyl diphospho-[N-acetyl-alpha-D-glucosaminyl-(1-&gt;4)]-N-acetyl-alpha-D-muramoyl-L-alanyl-D-glutamyl-meso-2,6-diaminopimeloyl-D-alanyl-D-alanine + UDP + H(+). The protein operates within cell wall biogenesis; peptidoglycan biosynthesis. In terms of biological role, cell wall formation. Catalyzes the transfer of a GlcNAc subunit on undecaprenyl-pyrophosphoryl-MurNAc-pentapeptide (lipid intermediate I) to form undecaprenyl-pyrophosphoryl-MurNAc-(pentapeptide)GlcNAc (lipid intermediate II). This Rhizobium etli (strain ATCC 51251 / DSM 11541 / JCM 21823 / NBRC 15573 / CFN 42) protein is UDP-N-acetylglucosamine--N-acetylmuramyl-(pentapeptide) pyrophosphoryl-undecaprenol N-acetylglucosamine transferase.